The chain runs to 494 residues: Cytochrome P450 2A7 (494 aa).

Cys-439 provides a ligand contact to heme.

Belongs to the cytochrome P450 family. It depends on heme as a cofactor.

It localises to the endoplasmic reticulum membrane. The protein resides in the microsome membrane. The enzyme catalyses an organic molecule + reduced [NADPH--hemoprotein reductase] + O2 = an alcohol + oxidized [NADPH--hemoprotein reductase] + H2O + H(+). In terms of biological role, cytochromes P450 are a group of heme-thiolate monooxygenases. In liver microsomes, this enzyme is involved in an NADPH-dependent electron transport pathway. It oxidizes a variety of structurally unrelated compounds, including steroids, fatty acids, and xenobiotics. In Homo sapiens (Human), this protein is Cytochrome P450 2A7 (CYP2A7).